Consider the following 80-residue polypeptide: Large ribosomal subunit protein uL24 (80 aa).

Belongs to the universal ribosomal protein uL24 family. Part of the 50S ribosomal subunit.

In terms of biological role, one of two assembly initiator proteins, it binds directly to the 5'-end of the 23S rRNA, where it nucleates assembly of the 50S subunit. One of the proteins that surrounds the polypeptide exit tunnel on the outside of the subunit. This Chlorobaculum tepidum (strain ATCC 49652 / DSM 12025 / NBRC 103806 / TLS) (Chlorobium tepidum) protein is Large ribosomal subunit protein uL24.